The primary structure comprises 665 residues: Intraflagellar transport protein 70A (665 aa).

TPR repeat units lie at residues 11-44 (DGEFTALVYRLIRDARYAEAVQLLGRELQRSPRS), 45-78 (RAGLSLLGYCYYRLQEFALAAECYEQLGQLHPEL), 154-187 (TDGQVNLGCLLYKEGQYEAACSKFSATLQASGYQ), 189-221 (DLSYNLALAYYSSRQYASALKHIAEIIERGIRQ), 393-424 (LTKQVQEARHNRDDEAIKKAVNEYDETMEKYI), 425-457 (PVLMAQAKIYWNLENYPMVEKVFRKSVEFCNDH), and 459-492 (VWKLNVAHVLFMQENKYKEAIGFYEPIVKKHYDN). Residues 508–535 (YIMTSQNEEAEELMRKIEKEEEQLSYDD) are a coiled coil. The TPR 8 repeat unit spans residues 544–577 (CIVNLVIGTLYCAKGNYEFGISRVIKSLEPYNKK).

The protein belongs to the TTC30/dfy-1/fleer family.

The protein localises to the cell projection. It localises to the cilium. In terms of biological role, required for polyglutamylation of axonemal tubulin. Plays a role in anterograde intraflagellar transport (IFT), the process by which cilia precursors are transported from the base of the cilium to the site of their incorporation at the tip. In Homo sapiens (Human), this protein is Intraflagellar transport protein 70A.